A 368-amino-acid chain; its full sequence is tRNA-specific 2-thiouridylase MnmA (368 aa).

ATP-binding positions include 11-18 (GMSGGVDS) and Met37. The interaction with target base in tRNA stretch occupies residues 97-99 (NPD). Cys102 (nucleophile) is an active-site residue. Cys102 and Cys199 are oxidised to a cystine. Gly127 provides a ligand contact to ATP. The segment at 149-151 (KDQ) is interaction with tRNA. The Cysteine persulfide intermediate role is filled by Cys199. The interaction with tRNA stretch occupies residues 311–312 (RY).

The protein belongs to the MnmA/TRMU family. As to quaternary structure, interacts with TusE.

It localises to the cytoplasm. The catalysed reaction is S-sulfanyl-L-cysteinyl-[protein] + uridine(34) in tRNA + AH2 + ATP = 2-thiouridine(34) in tRNA + L-cysteinyl-[protein] + A + AMP + diphosphate + H(+). Catalyzes the 2-thiolation of uridine at the wobble position (U34) of tRNA(Lys), tRNA(Glu) and tRNA(Gln), leading to the formation of s(2)U34, the first step of tRNA-mnm(5)s(2)U34 synthesis. Sulfur is provided by IscS, via a sulfur-relay system. Binds ATP and its substrate tRNAs. This is tRNA-specific 2-thiouridylase MnmA from Escherichia coli O139:H28 (strain E24377A / ETEC).